A 141-amino-acid chain; its full sequence is Large ribosomal subunit protein uL11 (141 aa).

This sequence belongs to the universal ribosomal protein uL11 family. In terms of assembly, part of the ribosomal stalk of the 50S ribosomal subunit. Interacts with L10 and the large rRNA to form the base of the stalk. L10 forms an elongated spine to which L12 dimers bind in a sequential fashion forming a multimeric L10(L12)X complex. One or more lysine residues are methylated.

Functionally, forms part of the ribosomal stalk which helps the ribosome interact with GTP-bound translation factors. The protein is Large ribosomal subunit protein uL11 of Roseiflexus sp. (strain RS-1).